Here is a 288-residue protein sequence, read N- to C-terminus: Shikimate dehydrogenase (NADP(+)) (288 aa).

Residues 21-23 (SLS) and Thr68 contribute to the shikimate site. Catalysis depends on Lys72, which acts as the Proton acceptor. Glu84 lines the NADP(+) pocket. Residues Asn93 and Asp108 each coordinate shikimate. NADP(+) contacts are provided by residues 132-136 (GNGGA) and Leu230. A shikimate-binding site is contributed by Tyr232. An NADP(+)-binding site is contributed by Gly253.

The protein belongs to the shikimate dehydrogenase family. Homodimer.

The enzyme catalyses shikimate + NADP(+) = 3-dehydroshikimate + NADPH + H(+). Its pathway is metabolic intermediate biosynthesis; chorismate biosynthesis; chorismate from D-erythrose 4-phosphate and phosphoenolpyruvate: step 4/7. In terms of biological role, involved in the biosynthesis of the chorismate, which leads to the biosynthesis of aromatic amino acids. Catalyzes the reversible NADPH linked reduction of 3-dehydroshikimate (DHSA) to yield shikimate (SA). The chain is Shikimate dehydrogenase (NADP(+)) from Gloeothece citriformis (strain PCC 7424) (Cyanothece sp. (strain PCC 7424)).